We begin with the raw amino-acid sequence, 414 residues long: MTQANLSETLFKPRFKHPETSTLVRRFNHGAQPPVQSALDGKTIPHWYRMINRLMWIWRGIDPREILDVQARIVMSDAERTDDDLYDTVIGYRGGNWIYEWATQAMVWQQKACAEEDPQLSGRHWLHAATLYNIAAYPHLKGDDLAEQAQALSNRAYEEAAQRLPGTMRQMEFTVPGGAPITGFLHMPKGDGPFPTVLMCGGLDAMQTDYYSLYERYFAPRGIVMLTIDMPSVGFSSKWKLTQDSSLLHQHVLKALPNVPWVDHTRVAAFGFRFGANVAVRLAYLESPRLKAVACLGPVVHTLLSDFKCQQQVPEMYLDVLASRLGMHDASDEALRVELNRYSLKVQGLLGRRCPTPMLSGYWKNDPFSPEEDSRLITSSSADGKLLEIPFYPVYRNFDKGLQEITGWIEKRLC.

It belongs to the FrsA family.

It carries out the reaction a carboxylic ester + H2O = an alcohol + a carboxylate + H(+). Its function is as follows. Catalyzes the hydrolysis of esters. This is Esterase FrsA from Shigella boydii serotype 18 (strain CDC 3083-94 / BS512).